We begin with the raw amino-acid sequence, 196 residues long: Probable malonic semialdehyde reductase RutE (196 aa).

Belongs to the nitroreductase family. HadB/RutE subfamily. It depends on FMN as a cofactor.

The catalysed reaction is 3-hydroxypropanoate + NADP(+) = 3-oxopropanoate + NADPH + H(+). Its function is as follows. May reduce toxic product malonic semialdehyde to 3-hydroxypropionic acid, which is excreted. This Enterobacter sp. (strain 638) protein is Probable malonic semialdehyde reductase RutE.